A 221-amino-acid chain; its full sequence is Putative hemin import ATP-binding protein HrtA (221 aa).

An ABC transporter domain is found at 3-221 (LVVKDIVKNF…IELEDGKITD (219 aa)). Residue 39–46 (GASGSGKT) participates in ATP binding.

Belongs to the ABC transporter superfamily. HrtA family. In terms of assembly, the complex is composed of two ATP-binding proteins (HrtA), two transmembrane proteins (HrtB) and a solute-binding protein.

It is found in the cell membrane. Functionally, part of the ABC transporter complex hrt involved in hemin import. Responsible for energy coupling to the transport system. This is Putative hemin import ATP-binding protein HrtA (hrtA) from Staphylococcus aureus (strain Mu50 / ATCC 700699).